The following is a 407-amino-acid chain: Probable 2,3-bisphosphoglycerate-independent phosphoglycerate mutase (407 aa).

The segment at 175–200 is disordered; the sequence is GSDAINDTDPQQVGKEPLEPKGENPN.

This sequence belongs to the BPG-independent phosphoglycerate mutase family. A-PGAM subfamily.

The catalysed reaction is (2R)-2-phosphoglycerate = (2R)-3-phosphoglycerate. It functions in the pathway carbohydrate degradation; glycolysis; pyruvate from D-glyceraldehyde 3-phosphate: step 3/5. Its function is as follows. Catalyzes the interconversion of 2-phosphoglycerate and 3-phosphoglycerate. The polypeptide is Probable 2,3-bisphosphoglycerate-independent phosphoglycerate mutase (Aquifex aeolicus (strain VF5)).